Reading from the N-terminus, the 556-residue chain is Urocanate hydratase (556 aa).

NAD(+)-binding positions include glycine 52–glycine 53, glutamine 130, glycine 176–glycine 178, glutamate 196, arginine 201, asparagine 242–alanine 243, glutamine 263–histidine 267, tyrosine 273–leucine 274, and tyrosine 322. The active site involves cysteine 410. Glycine 492 is an NAD(+) binding site.

The protein belongs to the urocanase family. The cofactor is NAD(+).

The protein localises to the cytoplasm. It carries out the reaction 4-imidazolone-5-propanoate = trans-urocanate + H2O. Its pathway is amino-acid degradation; L-histidine degradation into L-glutamate; N-formimidoyl-L-glutamate from L-histidine: step 2/3. In terms of biological role, catalyzes the conversion of urocanate to 4-imidazolone-5-propionate. The sequence is that of Urocanate hydratase from Shewanella sp. (strain MR-7).